The chain runs to 673 residues: Fatty acyl-CoA synthetase B (673 aa).

Residues 1–18 (MINNWLAVGLLVVSGILA) form the signal peptide. Residue Asn-267 is glycosylated (N-linked (GlcNAc...) asparagine).

This sequence belongs to the ATP-dependent AMP-binding enzyme family.

The protein resides in the endoplasmic reticulum. The enzyme catalyses a long-chain fatty acid + ATP + CoA = a long-chain fatty acyl-CoA + AMP + diphosphate. Functionally, long chain fatty acid acyl-CoA synthetases catalyze the formation of a thiester bond between a free fatty acid and coenzyme A during fatty acid metabolic process. The sequence is that of Fatty acyl-CoA synthetase B (fcsB) from Dictyostelium discoideum (Social amoeba).